Here is a 478-residue protein sequence, read N- to C-terminus: Methylenetetrahydrofolate--tRNA-(uracil-5-)-methyltransferase TrmFO (478 aa).

16-21 (GAGLAG) is an FAD binding site. The segment at 429–448 (PLANPPTKGPDGKRLRGPEK) is disordered. Residues 438-448 (PDGKRLRGPEK) are compositionally biased toward basic and acidic residues.

This sequence belongs to the MnmG family. TrmFO subfamily. FAD is required as a cofactor.

Its subcellular location is the cytoplasm. It carries out the reaction uridine(54) in tRNA + (6R)-5,10-methylene-5,6,7,8-tetrahydrofolate + NADH + H(+) = 5-methyluridine(54) in tRNA + (6S)-5,6,7,8-tetrahydrofolate + NAD(+). The enzyme catalyses uridine(54) in tRNA + (6R)-5,10-methylene-5,6,7,8-tetrahydrofolate + NADPH + H(+) = 5-methyluridine(54) in tRNA + (6S)-5,6,7,8-tetrahydrofolate + NADP(+). Its function is as follows. Catalyzes the folate-dependent formation of 5-methyl-uridine at position 54 (M-5-U54) in all tRNAs. In Rhodopseudomonas palustris (strain ATCC BAA-98 / CGA009), this protein is Methylenetetrahydrofolate--tRNA-(uracil-5-)-methyltransferase TrmFO.